Consider the following 115-residue polypeptide: uncharacterized protein (115 aa).

Positions 63–108 (GSPCGFEFREAITCQKTNSDGEIEQGACGKELMSFMECVTRTQCFG) constitute a CHCH domain. 2 consecutive short sequence motifs (cx9C motif) follow at residues 66 to 76 (CGFEFREAITC) and 90 to 100 (CGKELMSFMEC). Cystine bridges form between Cys-66–Cys-100 and Cys-76–Cys-90.

This is an uncharacterized protein from Caenorhabditis elegans.